The chain runs to 629 residues: Interleukin-23 receptor (629 aa).

The N-terminal stretch at M1 to G23 is a signal peptide. The Extracellular portion of the chain corresponds to G24–G355. Residue N29 is glycosylated (N-linked (GlcNAc...) asparagine; partial). N47, N81, and N141 each carry an N-linked (GlcNAc...) asparagine glycan. 2 Fibronectin type-III domains span residues I127–I217 and I219–T318. N180 is a glycosylation site (N-linked (GlcNAc...) (high mannose) asparagine). N232 and N262 each carry an N-linked (GlcNAc...) asparagine glycan. N-linked (GlcNAc...) asparagine; partial glycosylation is present at N273. The chain crosses the membrane as a helical span at residues L356–F376. The Cytoplasmic portion of the chain corresponds to N377–K629.

It belongs to the type I cytokine receptor family. Type 2 subfamily. In terms of assembly, heterodimer with IL12RB1. In presence of IL23, the heterodimer forms the IL23 receptor. Interacts with JAK2 and in presence of IL23 with STAT3. Post-translationally, phosphorylated in response to IL23. Expressed by monocytes, Th1, Th0, NK and dendritic cells. Isoform 1 is specifically expressed in NK cells.

It is found in the cell membrane. Functionally, associates with IL12RB1 to form the interleukin-23 receptor. Binds IL23 and mediates T-cells, NK cells and possibly certain macrophage/myeloid cells stimulation probably through activation of the Jak-Stat signaling cascade. IL23 functions in innate and adaptive immunity and may participate in acute response to infection in peripheral tissues. IL23 may be responsible for autoimmune inflammatory diseases and be important for tumorigenesis. The chain is Interleukin-23 receptor (IL23R) from Homo sapiens (Human).